Consider the following 136-residue polypeptide: Large ribosomal subunit protein uL16 (136 aa).

This sequence belongs to the universal ribosomal protein uL16 family. As to quaternary structure, part of the 50S ribosomal subunit.

Its function is as follows. Binds 23S rRNA and is also seen to make contacts with the A and possibly P site tRNAs. This chain is Large ribosomal subunit protein uL16, found in Vibrio vulnificus (strain YJ016).